Here is a 283-residue protein sequence, read N- to C-terminus: Aldo-keto reductase MSMEG_2407/MSMEI_2346 (283 aa).

Residue tyrosine 58 is the Proton donor of the active site. 11 residues coordinate NADPH: glycine 196, leucine 198, valine 200, isoleucine 236, arginine 238, serine 239, alanine 240, arginine 244, serine 247, asparagine 248, and arginine 274.

The protein belongs to the aldo/keto reductase family. Monomer.

Its activity is regulated as follows. Inhibited by the antituberculosis drug isoniazid (INH). In terms of biological role, catalyzes the NADPH-dependent reduction of dicarbonyls. Exhibits narrow substrate specificity, with preferential activity against the dicarbonyl substrates phenylglyoxal and methylglyoxal. Exhibits weak activity with ethyl-2-methyl acetoacetate. Cannot use NADH. May play an important role in the detoxification of methylglyoxal. This is Aldo-keto reductase MSMEG_2407/MSMEI_2346 from Mycolicibacterium smegmatis (strain ATCC 700084 / mc(2)155) (Mycobacterium smegmatis).